The sequence spans 793 residues: Serine/threonine-protein kinase CLA4 (793 aa).

Residues 8–27 (RELSESDFQDIGPAPKPPPV) form a disordered region. One can recognise a PH domain in the interval 56–168 (QRKKSGWVSY…WLDSIFSKCP (113 aa)). A CRIB domain is found at 173 to 186 (VSSPTNFTHKVHVG). Disordered regions lie at residues 243–369 (AAAQ…ESPT) and 383–476 (QKQL…RPTM). Composition is skewed to polar residues over residues 258–276 (TLSS…STPP), 312–337 (GVTT…QSGP), and 355–369 (LGNS…ESPT). The region spanning 498-776 (FQMIEKAGQG…TEELLHHSFF (279 aa)) is the Protein kinase domain. ATP-binding positions include 504 to 512 (AGQGASGSV) and Lys545. The active-site Proton acceptor is the Asp644.

It belongs to the protein kinase superfamily. STE Ser/Thr protein kinase family. STE20 subfamily.

It catalyses the reaction L-seryl-[protein] + ATP = O-phospho-L-seryl-[protein] + ADP + H(+). The enzyme catalyses L-threonyl-[protein] + ATP = O-phospho-L-threonyl-[protein] + ADP + H(+). Its function is as follows. Required for hyphal maturation and for septation. The sequence is that of Serine/threonine-protein kinase CLA4 (CLA4) from Eremothecium gossypii (strain ATCC 10895 / CBS 109.51 / FGSC 9923 / NRRL Y-1056) (Yeast).